A 497-amino-acid polypeptide reads, in one-letter code: Bypass of stop codon protein 6 (497 aa).

The Lumenal portion of the chain corresponds to 1 to 72; the sequence is MDASSVPPKV…KVKTYPLNYQ (72 aa). Phosphoserine occurs at positions 37 and 41. Residue asparagine 49 is glycosylated (N-linked (GlcNAc...) asparagine). Residues 73–93 traverse the membrane as a helical segment; the sequence is TVPLVKLQVIACLIMFVVFGM. The Cytoplasmic portion of the chain corresponds to 94–144; the sequence is NDQTVGALLPTLIEYYHISRVDVSNVFIVQLCGYVMASLSKERLNKHFGMR. Residues 145-165 form a helical membrane-spanning segment; the sequence is GGMLLAAGLCIVFLIILATAP. Topologically, residues 166-167 are lumenal; the sequence is SS. A helical transmembrane segment spans residues 168–188; it reads FYVCMFCGLPLGLGIGILDST. The Cytoplasmic segment spans residues 189-205; it reads GNVLMGSLLVHKNELMG. Residues 206–226 traverse the membrane as a helical segment; it reads IMHGLYGAAAMVTPPLVSYFV. Residues 227–232 lie on the Lumenal side of the membrane; the sequence is EWGHWS. Residues 233-253 form a helical membrane-spanning segment; it reads LFFLIPLFFSIIGMIVIFPAF. At 254–300 the chain is on the cytoplasmic side; the sequence is KFETASKYDYLCSVENKESNNDVEEAGDNSLMESTKASPGFFELLRN. The helical transmembrane segment at 301–321 threads the bilayer; sequence PAIFLYSLYLFLYLGAEITTG. At 322-340 the chain is on the lumenal side; sequence SWFFSYLLETKSSNKVAMS. Residues 341–361 traverse the membrane as a helical segment; the sequence is YIAASFWTGLTVGRLCLGFVT. Residues 362 to 373 lie on the Cytoplasmic side of the membrane; that stretch reads ERFFENEYKASK. A helical membrane pass occupies residues 374 to 394; sequence AYAFLTLSSYTLFVLVGLINS. Residues 395-397 lie on the Lumenal side of the membrane; it reads SSV. Residues 398-418 traverse the membrane as a helical segment; the sequence is FYFVVLFFVVFCCGTFIGPLF. Residues 419-439 lie on the Cytoplasmic side of the membrane; sequence PNASIVALQVLPKRLHVSGVG. Residues 440–460 form a helical membrane-spanning segment; sequence VAVAVGGCGGAAIPYLAGVIA. At 461 to 462 the chain is on the lumenal side; the sequence is HT. A helical membrane pass occupies residues 463–483; sequence VGIQYIPLLCWIMVALFTLEW. The Cytoplasmic segment spans residues 484–497; sequence TLYPKFIKGHEEYF.

The protein belongs to the major facilitator superfamily.

Its subcellular location is the golgi apparatus. It is found in the cis-Golgi network membrane. Functionally, probable transporter. This chain is Bypass of stop codon protein 6 (BSC6), found in Saccharomyces cerevisiae (strain ATCC 204508 / S288c) (Baker's yeast).